A 247-amino-acid polypeptide reads, in one-letter code: tRNA pseudouridine synthase A 1 (247 aa).

Residue aspartate 53 is the Nucleophile of the active site. A substrate-binding site is contributed by tyrosine 111.

Belongs to the tRNA pseudouridine synthase TruA family. Homodimer.

The catalysed reaction is uridine(38/39/40) in tRNA = pseudouridine(38/39/40) in tRNA. Formation of pseudouridine at positions 38, 39 and 40 in the anticodon stem and loop of transfer RNAs. The sequence is that of tRNA pseudouridine synthase A 1 from Bacillus cereus (strain ZK / E33L).